The sequence spans 337 residues: Probable allantoicase 1 (337 aa).

Belongs to the allantoicase family.

The catalysed reaction is allantoate + H2O = (S)-ureidoglycolate + urea. It functions in the pathway nitrogen metabolism; (S)-allantoin degradation; (S)-ureidoglycolate from allantoate (aminidohydrolase route): step 1/1. The protein is Probable allantoicase 1 of Burkholderia mallei (strain ATCC 23344).